A 154-amino-acid polypeptide reads, in one-letter code: Ribosome maturation factor RimP (154 aa).

Belongs to the RimP family.

It is found in the cytoplasm. Required for maturation of 30S ribosomal subunits. This Thioalkalivibrio sulfidiphilus (strain HL-EbGR7) protein is Ribosome maturation factor RimP.